We begin with the raw amino-acid sequence, 437 residues long: Putative ABC transporter ATP-binding protein CTC_00753 (437 aa).

ABC transporter domains are found at residues 1–143 (MERE…LPTI) and 179–416 (LKFK…QISK). 219–226 (GENGAGKS) provides a ligand contact to ATP.

The protein belongs to the ABC transporter superfamily.

It is found in the cell membrane. Functionally, probably part of an ABC transporter complex. Responsible for energy coupling to the transport system. The protein is Putative ABC transporter ATP-binding protein CTC_00753 of Clostridium tetani (strain Massachusetts / E88).